Consider the following 81-residue polypeptide: Acylphosphatase (81 aa).

The region spanning 1–81 is the Acylphosphatase-like domain; it reads MYIFHGRVQG…VKYNDFQIRY (81 aa). Catalysis depends on residues Arg14 and Asn32.

It belongs to the acylphosphatase family.

It catalyses the reaction an acyl phosphate + H2O = a carboxylate + phosphate + H(+). The protein is Acylphosphatase (acyP) of Picrophilus torridus (strain ATCC 700027 / DSM 9790 / JCM 10055 / NBRC 100828 / KAW 2/3).